An 878-amino-acid polypeptide reads, in one-letter code: Alanine--tRNA ligase (878 aa).

Zn(2+)-binding residues include H567, H571, C669, and H673.

This sequence belongs to the class-II aminoacyl-tRNA synthetase family. The cofactor is Zn(2+).

It localises to the cytoplasm. The catalysed reaction is tRNA(Ala) + L-alanine + ATP = L-alanyl-tRNA(Ala) + AMP + diphosphate. Its function is as follows. Catalyzes the attachment of alanine to tRNA(Ala) in a two-step reaction: alanine is first activated by ATP to form Ala-AMP and then transferred to the acceptor end of tRNA(Ala). Also edits incorrectly charged Ser-tRNA(Ala) and Gly-tRNA(Ala) via its editing domain. This is Alanine--tRNA ligase from Rickettsia felis (strain ATCC VR-1525 / URRWXCal2) (Rickettsia azadi).